A 108-amino-acid chain; its full sequence is uncharacterized protein (108 aa).

This is an uncharacterized protein from Saccharomyces cerevisiae (strain ATCC 204508 / S288c) (Baker's yeast).